Reading from the N-terminus, the 124-residue chain is Small ribosomal subunit protein bS6 (124 aa).

The disordered stretch occupies residues 97–124 (EQGPSAMMRRGDRDRSNRSDRRRDRDAA). Residues 105-124 (RRGDRDRSNRSDRRRDRDAA) show a composition bias toward basic and acidic residues.

The protein belongs to the bacterial ribosomal protein bS6 family.

Functionally, binds together with bS18 to 16S ribosomal RNA. This Zymomonas mobilis subsp. mobilis (strain ATCC 31821 / ZM4 / CP4) protein is Small ribosomal subunit protein bS6.